The following is a 227-amino-acid chain: Octanoyltransferase (227 aa).

Positions 35–210 (DKTPDEIWLV…TFLQLVGYSA (176 aa)) constitute a BPL/LPL catalytic domain. Substrate contacts are provided by residues 74-81 (RGGQVTYH), 141-143 (SLG), and 154-156 (GLA). Cys172 serves as the catalytic Acyl-thioester intermediate.

Belongs to the LipB family.

The protein localises to the cytoplasm. It carries out the reaction octanoyl-[ACP] + L-lysyl-[protein] = N(6)-octanoyl-L-lysyl-[protein] + holo-[ACP] + H(+). Its pathway is protein modification; protein lipoylation via endogenous pathway; protein N(6)-(lipoyl)lysine from octanoyl-[acyl-carrier-protein]: step 1/2. Its function is as follows. Catalyzes the transfer of endogenously produced octanoic acid from octanoyl-acyl-carrier-protein onto the lipoyl domains of lipoate-dependent enzymes. Lipoyl-ACP can also act as a substrate although octanoyl-ACP is likely to be the physiological substrate. This is Octanoyltransferase from Pectobacterium atrosepticum (strain SCRI 1043 / ATCC BAA-672) (Erwinia carotovora subsp. atroseptica).